We begin with the raw amino-acid sequence, 99 residues long: DNA-directed RNA polymerase subunit omega (99 aa).

The protein belongs to the RNA polymerase subunit omega family. As to quaternary structure, the RNAP catalytic core consists of 2 alpha, 1 beta, 1 beta' and 1 omega subunit. When a sigma factor is associated with the core the holoenzyme is formed, which can initiate transcription.

It carries out the reaction RNA(n) + a ribonucleoside 5'-triphosphate = RNA(n+1) + diphosphate. In terms of biological role, promotes RNA polymerase assembly. Latches the N- and C-terminal regions of the beta' subunit thereby facilitating its interaction with the beta and alpha subunits. The chain is DNA-directed RNA polymerase subunit omega from Thermus thermophilus (strain ATCC BAA-163 / DSM 7039 / HB27).